The primary structure comprises 301 residues: uncharacterized protein (301 aa).

2 disordered regions span residues D167–R186 and A225–S244. The segment covering L170–V181 has biased composition (polar residues). A compositionally biased stretch (low complexity) spans S226–S237.

This is an uncharacterized protein from Mus musculus (Mouse).